A 316-amino-acid chain; its full sequence is tRNA pseudouridine synthase B (316 aa).

The active-site Nucleophile is aspartate 38. Residues 238 to 312 (YPEVIVKSSA…PVCVLARQAG (75 aa)) enclose the PUA domain.

It belongs to the pseudouridine synthase TruB family. Type 1 subfamily.

The catalysed reaction is uridine(55) in tRNA = pseudouridine(55) in tRNA. Responsible for synthesis of pseudouridine from uracil-55 in the psi GC loop of transfer RNAs. This is tRNA pseudouridine synthase B from Pelotomaculum thermopropionicum (strain DSM 13744 / JCM 10971 / SI).